The sequence spans 188 residues: Protein-arginine kinase activator protein (188 aa).

Short sequence motifs (CXXC metal binding motif) lie at residues 3–6 (CENC), 29–32 (CQTC), 87–90 (CPSC), and 105–108 (CANC). One can recognise a UVR domain in the interval 145-180 (KRKIEEKNEYLKKLIEIQDFEEAAIVRDEIKALKAE).

Interacts with McsB and CtsR; the CXXC motifs are needed for the binding.

Functionally, activates the phosphorylation activity of the protein-arginine kinase McsB. May function as an important molecule for oxidative tolerance in various types of stress including that of heavy metals. Binds to Cu(2+), Zn(2+), Co(2+) and Cd(2+) via its CXXC metal binding motifs. This chain is Protein-arginine kinase activator protein, found in Staphylococcus aureus (strain NCTC 8325 / PS 47).